The chain runs to 892 residues: Transmembrane channel-like protein 2-B (892 aa).

Positions 29–125 (GINQNLRREE…DESMSEGEMA (97 aa)) are disordered. 2 stretches are compositionally biased toward basic residues: residues 48–58 (RRAKKRRMNRR) and 66–77 (RSKKMRMRVRKN). Positions 103-112 (PSSCSSSSDN) are enriched in low complexity. A run of 9 helical transmembrane segments spans residues 235–255 (LVLF…MGIP), 275–295 (FSVL…YGFY), 308–328 (LPLS…MVVI), 403–423 (LANV…YAVV), 444–464 (EVEI…EAIA), 482–502 (IFAL…DEVN), 616–636 (LIFN…LVGI), 671–691 (FYMG…IYSI), and 736–756 (GLII…LNAV). Over residues 772–785 (QMQRDEEKNRRNNK) the composition is skewed to basic and acidic residues. 2 disordered regions span residues 772–791 (QMQR…TNQV) and 796–892 (EDLL…PPRR). The span at 862-878 (PRQPGPLPGNPRGPPPG) shows a compositional bias: pro residues.

It belongs to the TMC family. In terms of tissue distribution, in adults, expression is restricted to the hair cells of inner ear and lateral line organ. Expressed at higher levels in the larval lateral-line neuromasts than in the larval inner ear.

It is found in the membrane. Probable component of the mechanotransducer (MET) non-selective cation channel. The sequence is that of Transmembrane channel-like protein 2-B from Danio rerio (Zebrafish).